The following is a 167-amino-acid chain: MRTLVIEPLSKEAFAPFGDVIETDGSDHFMINNGSTMRFHRLATVETAQPEDQAIISIFRADALDMPLTIRMLERHPLGSQAFIPLLGNPFLIVVAPLGDEPVSGLVRAFVSNGRQGINYHRGVWHHPVLTIEKRDDFLVVDRSGTGNNCDEHFFKEDERLILAPHQ.

The protein belongs to the ureidoglycolate lyase family. Homodimer. Ni(2+) serves as cofactor.

The enzyme catalyses (S)-ureidoglycolate = urea + glyoxylate. The protein operates within nitrogen metabolism; (S)-allantoin degradation. Its function is as follows. Catalyzes the catabolism of the allantoin degradation intermediate (S)-ureidoglycolate, generating urea and glyoxylate. Involved in the utilization of allantoin as nitrogen source. The sequence is that of Ureidoglycolate lyase from Pseudomonas fluorescens (strain ATCC BAA-477 / NRRL B-23932 / Pf-5).